A 170-amino-acid chain; its full sequence is 3-hydroxyacyl-[acyl-carrier-protein] dehydratase FabZ (170 aa).

His-66 is an active-site residue.

The protein belongs to the thioester dehydratase family. FabZ subfamily.

It localises to the cytoplasm. It carries out the reaction a (3R)-hydroxyacyl-[ACP] = a (2E)-enoyl-[ACP] + H2O. Functionally, involved in unsaturated fatty acids biosynthesis. Catalyzes the dehydration of short chain beta-hydroxyacyl-ACPs and long chain saturated and unsaturated beta-hydroxyacyl-ACPs. This Granulibacter bethesdensis (strain ATCC BAA-1260 / CGDNIH1) protein is 3-hydroxyacyl-[acyl-carrier-protein] dehydratase FabZ.